Here is a 776-residue protein sequence, read N- to C-terminus: Transcription activator of gluconeogenesis HCAG_03671 (776 aa).

Positions 1–70 are disordered; sequence MTASTQNGSP…NAKDPLRPRR (70 aa). Polar residues-rich tracts occupy residues 21-41 and 50-60; these read NQES…QSPA and ENGQKHTSTAA. The segment at residues 77 to 105 is a DNA-binding region (zn(2)-C6 fungal-type); the sequence is CFACQRAHLTCGDERPCQRCIKRGLQDAC. 5 disordered regions span residues 140 to 159, 179 to 248, 286 to 351, 556 to 593, and 651 to 726; these read RTNA…KDSR, TQAK…PFGA, GAGD…NIYN, NLNV…GGGG, and REAQ…SPKQ. Residues 142 to 155 show a composition bias toward low complexity; it reads NASQQQNGPNSNSN. Residues 195–217 are compositionally biased toward polar residues; the sequence is MQDTSINPSAFQAPSPTSTPNFD. Over residues 218–229 the composition is skewed to low complexity; the sequence is LSSNPPNRNLSS. 4 stretches are compositionally biased toward polar residues: residues 230–244, 292–322, 334–351, and 557–576; these read AMTQ…QTQD, PSDS…NTQP, WNPS…NIYN, and LNVN…TPRN. Over residues 657–669 the composition is skewed to gly residues; that stretch reads GPDGKGGGGGGGD. The span at 670 to 714 shows a compositional bias: low complexity; it reads VATTAATTSTSTSNGANSSGHANANRNNTNPNNSSPPSSSSAAAA.

The protein belongs to the ERT1/acuK family.

The protein resides in the nucleus. Transcription factor which regulates nonfermentable carbon utilization. Activator of gluconeogenetic genes. In Ajellomyces capsulatus (strain NAm1 / WU24) (Darling's disease fungus), this protein is Transcription activator of gluconeogenesis HCAG_03671.